A 124-amino-acid chain; its full sequence is UPF0102 protein Rcas_2007 (124 aa).

Belongs to the UPF0102 family.

The sequence is that of UPF0102 protein Rcas_2007 from Roseiflexus castenholzii (strain DSM 13941 / HLO8).